The chain runs to 97 residues: Large ribosomal subunit protein uL23 (97 aa).

This sequence belongs to the universal ribosomal protein uL23 family. In terms of assembly, part of the 50S ribosomal subunit. Contacts protein L29, and trigger factor when it is bound to the ribosome.

In terms of biological role, one of the early assembly proteins it binds 23S rRNA. One of the proteins that surrounds the polypeptide exit tunnel on the outside of the ribosome. Forms the main docking site for trigger factor binding to the ribosome. This Brucella suis (strain ATCC 23445 / NCTC 10510) protein is Large ribosomal subunit protein uL23.